The sequence spans 313 residues: Ribonuclease Z (313 aa).

Positions 62, 64, 66, 67, 142, 212, and 270 each coordinate Zn(2+). Asp-66 acts as the Proton acceptor in catalysis.

The protein belongs to the RNase Z family. Homodimer. It depends on Zn(2+) as a cofactor.

The catalysed reaction is Endonucleolytic cleavage of RNA, removing extra 3' nucleotides from tRNA precursor, generating 3' termini of tRNAs. A 3'-hydroxy group is left at the tRNA terminus and a 5'-phosphoryl group is left at the trailer molecule.. In terms of biological role, zinc phosphodiesterase, which displays some tRNA 3'-processing endonuclease activity. Probably involved in tRNA maturation, by removing a 3'-trailer from precursor tRNA. The sequence is that of Ribonuclease Z from Cytophaga hutchinsonii (strain ATCC 33406 / DSM 1761 / CIP 103989 / NBRC 15051 / NCIMB 9469 / D465).